A 182-amino-acid polypeptide reads, in one-letter code: UPF0301 protein MCA0413 1 (182 aa).

Belongs to the UPF0301 (AlgH) family.

The chain is UPF0301 protein MCA0413 1 from Methylococcus capsulatus (strain ATCC 33009 / NCIMB 11132 / Bath).